The primary structure comprises 396 residues: Elongation factor Tu (396 aa).

A tr-type G domain is found at 10–205; the sequence is KTHANIGTIG…AVDDYIPTPE (196 aa). Residues 19 to 26 form a G1 region; the sequence is GHVDHGKT. 19–26 serves as a coordination point for GTP; sequence GHVDHGKT. Position 26 (threonine 26) interacts with Mg(2+). The interval 61-65 is G2; the sequence is GITIS. Residues 82–85 are G3; the sequence is DCPG. Residues 82-86 and 137-140 contribute to the GTP site; these read DCPGH and NKCD. The interval 137–140 is G4; it reads NKCD. The tract at residues 175–177 is G5; it reads SAL.

The protein belongs to the TRAFAC class translation factor GTPase superfamily. Classic translation factor GTPase family. EF-Tu/EF-1A subfamily. Monomer.

The protein resides in the cytoplasm. It catalyses the reaction GTP + H2O = GDP + phosphate + H(+). Functionally, GTP hydrolase that promotes the GTP-dependent binding of aminoacyl-tRNA to the A-site of ribosomes during protein biosynthesis. The chain is Elongation factor Tu from Halalkalibacterium halodurans (strain ATCC BAA-125 / DSM 18197 / FERM 7344 / JCM 9153 / C-125) (Bacillus halodurans).